The primary structure comprises 322 residues: tRNA-dihydrouridine synthase B (322 aa).

FMN contacts are provided by residues 16–18 (PMA) and glutamine 70. Cysteine 100 acts as the Proton donor in catalysis. Residues lysine 139, 200–202 (NGD), and 224–225 (GR) contribute to the FMN site.

Belongs to the Dus family. DusB subfamily. Requires FMN as cofactor.

The catalysed reaction is a 5,6-dihydrouridine in tRNA + NAD(+) = a uridine in tRNA + NADH + H(+). It carries out the reaction a 5,6-dihydrouridine in tRNA + NADP(+) = a uridine in tRNA + NADPH + H(+). Its function is as follows. Catalyzes the synthesis of 5,6-dihydrouridine (D), a modified base found in the D-loop of most tRNAs, via the reduction of the C5-C6 double bond in target uridines. This chain is tRNA-dihydrouridine synthase B, found in Shewanella oneidensis (strain ATCC 700550 / JCM 31522 / CIP 106686 / LMG 19005 / NCIMB 14063 / MR-1).